Consider the following 71-residue polypeptide: UPF0352 protein Spea_1764 (71 aa).

The protein belongs to the UPF0352 family.

This is UPF0352 protein Spea_1764 from Shewanella pealeana (strain ATCC 700345 / ANG-SQ1).